A 316-amino-acid polypeptide reads, in one-letter code: Ribosomal RNA small subunit methyltransferase H (316 aa).

Residues 35-37, aspartate 55, phenylalanine 80, aspartate 102, and glutamine 109 each bind S-adenosyl-L-methionine; that span reads GGH.

It belongs to the methyltransferase superfamily. RsmH family.

It is found in the cytoplasm. The enzyme catalyses cytidine(1402) in 16S rRNA + S-adenosyl-L-methionine = N(4)-methylcytidine(1402) in 16S rRNA + S-adenosyl-L-homocysteine + H(+). Its function is as follows. Specifically methylates the N4 position of cytidine in position 1402 (C1402) of 16S rRNA. The chain is Ribosomal RNA small subunit methyltransferase H from Colwellia psychrerythraea (strain 34H / ATCC BAA-681) (Vibrio psychroerythus).